The following is a 764-amino-acid chain: Putative alpha-1,3-mannosyltransferase MNN13 (764 aa).

The Cytoplasmic segment spans residues 1–13; that stretch reads MIKPILGTKKIRR. Residues 14–34 form a helical membrane-spanning segment; the sequence is VICIIIGLFCILLLIGIFKHN. Over 35–764 the chain is Lumenal; the sequence is STNSVNNEAS…YLGDVWVGKY (730 aa). 2 N-linked (GlcNAc...) asparagine glycosylation sites follow: N45 and N204.

It belongs to the MNN1/MNT family.

The protein localises to the golgi apparatus membrane. It participates in protein modification; protein glycosylation. Responsible for addition of the terminal mannose residues to the outer chain of core N-linked polysaccharides and to O-linked mannotriose. Implicated in late Golgi modifications. This chain is Putative alpha-1,3-mannosyltransferase MNN13 (MNN13), found in Candida albicans (strain SC5314 / ATCC MYA-2876) (Yeast).